The primary structure comprises 507 residues: Protein adenylyltransferase fic-1 (507 aa).

The helical transmembrane segment at 40-56 threads the bilayer; that stretch reads YSLTTVVLVSLVVTLVC. 2 TPR repeats span residues 146 to 179 and 180 to 213; these read AILAAKAASRSRRDGNLERAVTIMEHAMALAPNN and PQILIEMGQIREMHNELVEADQCYVKALAYDPGN. Positions 269 to 274 match the Inhibitory (S/T)XXXE(G/N) motif motif; it reads TVAIEG. Residue glutamate 273 participates in ATP binding. Positions 325 to 460 constitute a Fido domain; sequence ISIDDILEMH…LRPFVRYVAK (136 aa). Residue threonine 351 is modified to O-AMP-threonine; by autocatalysis. 356 to 359 provides a ligand contact to ATP; sequence VGKF. Histidine 403 is a catalytic residue. ATP is bound by residues 407-414, 439-440, and asparagine 447; these read DGNGRTAR and YY. Threonine 475 carries the O-AMP-threonine; by autocatalysis modification. Positions 482-507 are disordered; it reads NGEEPNLTAEESKVSEKIETECRAGS. Residues 491–507 show a composition bias toward basic and acidic residues; it reads EESKVSEKIETECRAGS.

The protein belongs to the fic family. In terms of assembly, forms homodimers; homodimerization might be required for adenylyltransferase activity.

It localises to the endoplasmic reticulum membrane. Its subcellular location is the nucleus membrane. The catalysed reaction is L-tyrosyl-[protein] + ATP = O-(5'-adenylyl)-L-tyrosyl-[protein] + diphosphate. It catalyses the reaction L-threonyl-[protein] + ATP = 3-O-(5'-adenylyl)-L-threonyl-[protein] + diphosphate. The enzyme catalyses 3-O-(5'-adenylyl)-L-threonyl-[protein] + H2O = L-threonyl-[protein] + AMP + H(+). The side chain of Glu-273 determines which of the two opposing activities (AMPylase or de-AMPylase) will take place. In response to endoplasmic reticulum stress, mediates de-AMPylase activity. Adenylyltransferase activity is inhibited by the inhibitory helix present at the N-terminus: Glu-273 binds ATP and competes with ATP-binding at Arg-414, thereby preventing adenylyltransferase activity. In unstressed cells, disengagement of Glu-273 promotes adenylyltransferase activity. Activation dissociates ATP-binding from Glu-273, allowing ordered binding of the entire ATP moiety with the alpha-phosphate in an orientation that is productive for accepting an incoming target hydroxyl side chain. Functionally, protein that can both mediate the addition of adenosine 5'-monophosphate (AMP) to specific residues of target proteins (AMPylation), and the removal of the same modification from target proteins (de-AMPylation), depending on the context. The side chain of Glu-273 determines which of the two opposing activities (AMPylase or de-AMPylase) will take place. Adenylyltransferase that mediates the addition of adenosine 5'-monophosphate (AMP) to specific residues of target proteins. In vivo target proteins include the heat-shock 70 family proteins hsp-1 and hsp-3 and the translation elongation factors eef-1A, eef-1G and eef-2. Can AMPylate core histone H3 in vitro. Can also act as a phosphodiesterase by mediating removal of ATP (de-AMPylation) from target proteins. Decreases susceptibility to P.aeruginosa-mediated killing and might therefore play a role in the innate immune response. This Caenorhabditis briggsae protein is Protein adenylyltransferase fic-1 (fic-1).